Reading from the N-terminus, the 218-residue chain is Small ribosomal subunit protein uS3c (218 aa).

Residues 47-118 (VQKHMRISSG…RLNIAIARVA (72 aa)) form the KH type-2 domain.

This sequence belongs to the universal ribosomal protein uS3 family. In terms of assembly, part of the 30S ribosomal subunit.

Its subcellular location is the plastid. The protein localises to the chloroplast. The polypeptide is Small ribosomal subunit protein uS3c (rps3) (Nymphaea alba (White water-lily)).